The following is a 594-amino-acid chain: Cytosolic Fe-S cluster assembly factor NAR1 (594 aa).

[4Fe-4S] cluster contacts are provided by Cys20, Cys88, Cys91, Cys94, Cys209, and Cys264. Residues 444–465 (RRARMSKSEDSSGASASSMAPA) are disordered. The segment covering 454–465 (SSGASASSMAPA) has biased composition (low complexity). Residues Cys481 and Cys485 each coordinate [4Fe-4S] cluster. The disordered stretch occupies residues 492–511 (IAAPAPTSTPPAAPAPAHAA).

This sequence belongs to the NARF family.

Component of the cytosolic Fe/S protein assembly machinery. Required for maturation of extramitochondrial Fe/S proteins. May play a role in the transfer of pre-assembled Fe/S clusters to target apoproteins. This Lodderomyces elongisporus (strain ATCC 11503 / CBS 2605 / JCM 1781 / NBRC 1676 / NRRL YB-4239) (Yeast) protein is Cytosolic Fe-S cluster assembly factor NAR1 (NAR1).